A 271-amino-acid polypeptide reads, in one-letter code: Probable L,D-transpeptidase 3 (271 aa).

The L,D-TPase catalytic domain maps to 127-270; the sequence is VVGVASISQH…VDIGDPVIVQ (144 aa). Histidine 228 (proton donor/acceptor) is an active-site residue. The active-site Nucleophile is cysteine 246.

The protein operates within cell wall biogenesis; peptidoglycan biosynthesis. Its activity is regulated as follows. Is irreversibly inactivated by the beta-lactam carbapenems via the formation of a covalent adduct resulting from acylation of the catalytic Cys. Imipenem is the most efficient drug for in vitro LdtMt3/Rv1433 inactivation. In terms of biological role, probable L,D-transpeptidase that may perform as-yet-unknown cross-linking reactions in M.tuberculosis. Is not able to generate 3-&gt;3 cross-links in peptidoglycan, using tetrapeptide stems as acyl donor substrates. May function in the anchoring of proteins to peptidoglycan. The chain is Probable L,D-transpeptidase 3 from Mycobacterium tuberculosis (strain ATCC 25618 / H37Rv).